Here is a 445-residue protein sequence, read N- to C-terminus: Phosphoglucosamine mutase (445 aa).

The active-site Phosphoserine intermediate is the Ser-104. Mg(2+) is bound by residues Ser-104, Asp-243, Asp-245, and Asp-247. Phosphoserine is present on Ser-104.

Belongs to the phosphohexose mutase family. Requires Mg(2+) as cofactor. In terms of processing, activated by phosphorylation.

The enzyme catalyses alpha-D-glucosamine 1-phosphate = D-glucosamine 6-phosphate. Its function is as follows. Catalyzes the conversion of glucosamine-6-phosphate to glucosamine-1-phosphate. This Chromobacterium violaceum (strain ATCC 12472 / DSM 30191 / JCM 1249 / CCUG 213 / NBRC 12614 / NCIMB 9131 / NCTC 9757 / MK) protein is Phosphoglucosamine mutase.